A 358-amino-acid polypeptide reads, in one-letter code: 3'(2'),5'-bisphosphate nucleotidase 2 (358 aa).

D54 functions as the Proton acceptor in the catalytic mechanism. Mg(2+) contacts are provided by E77, D141, I143, and D144. The Proton acceptor role is filled by T146. Residues T146, H243, S272, K275, R289, and D302 each contribute to the adenosine 3',5'-bisphosphate site. Residues H243, S272, K275, R289, and D302 each contribute to the AMP site. Mg(2+) is bound at residue D302.

It belongs to the inositol monophosphatase superfamily. Requires Mg(2+) as cofactor.

The enzyme catalyses 3'-phosphoadenylyl sulfate + H2O = adenosine 5'-phosphosulfate + phosphate. The catalysed reaction is adenosine 3',5'-bisphosphate + H2O = AMP + phosphate. It carries out the reaction adenosine 2',5'-bisphosphate + H2O = AMP + phosphate. In terms of biological role, phosphatase that converts adenosine 3'-phosphate 5'-phosphosulfate (PAPS) to adenosine 5'-phosphosulfate (APS) and 3'(2')-phosphoadenosine 5'-phosphate (PAP) to AMP. Regulates the flux of sulfur in the sulfur-activation pathway by converting PAPS to APS. Involved in salt tolerance. The polypeptide is 3'(2'),5'-bisphosphate nucleotidase 2 (HAL22) (Candida albicans (strain SC5314 / ATCC MYA-2876) (Yeast)).